Here is a 174-residue protein sequence, read N- to C-terminus: ATP-dependent protease subunit HslV (174 aa).

Residue Thr4 is part of the active site. The Na(+) site is built by Ala159, Cys162, and Thr165.

The protein belongs to the peptidase T1B family. HslV subfamily. As to quaternary structure, a double ring-shaped homohexamer of HslV is capped on each side by a ring-shaped HslU homohexamer. The assembly of the HslU/HslV complex is dependent on binding of ATP.

Its subcellular location is the cytoplasm. The enzyme catalyses ATP-dependent cleavage of peptide bonds with broad specificity.. Allosterically activated by HslU binding. Its function is as follows. Protease subunit of a proteasome-like degradation complex believed to be a general protein degrading machinery. This chain is ATP-dependent protease subunit HslV, found in Moorella thermoacetica (strain ATCC 39073 / JCM 9320).